The primary structure comprises 203 residues: Glycerol-3-phosphate acyltransferase (203 aa).

A run of 4 helical transmembrane segments spans residues 6–26 (LTLL…AVLV), 82–102 (AISL…PIFF), 118–138 (APIG…LLLI), and 141–161 (YSSL…WWLD).

Belongs to the PlsY family. Probably interacts with PlsX.

The protein resides in the cell inner membrane. The enzyme catalyses an acyl phosphate + sn-glycerol 3-phosphate = a 1-acyl-sn-glycero-3-phosphate + phosphate. It functions in the pathway lipid metabolism; phospholipid metabolism. In terms of biological role, catalyzes the transfer of an acyl group from acyl-phosphate (acyl-PO(4)) to glycerol-3-phosphate (G3P) to form lysophosphatidic acid (LPA). This enzyme utilizes acyl-phosphate as fatty acyl donor, but not acyl-CoA or acyl-ACP. The protein is Glycerol-3-phosphate acyltransferase of Shewanella putrefaciens (strain CN-32 / ATCC BAA-453).